A 236-amino-acid polypeptide reads, in one-letter code: 7-cyano-7-deazaguanine synthase (236 aa).

7-17 (CSGGLDSVSLA) provides a ligand contact to ATP. The Zn(2+) site is built by Cys185, Cys193, Cys196, and Cys199.

Belongs to the QueC family. Requires Zn(2+) as cofactor.

It catalyses the reaction 7-carboxy-7-deazaguanine + NH4(+) + ATP = 7-cyano-7-deazaguanine + ADP + phosphate + H2O + H(+). Its pathway is purine metabolism; 7-cyano-7-deazaguanine biosynthesis. In terms of biological role, catalyzes the ATP-dependent conversion of 7-carboxy-7-deazaguanine (CDG) to 7-cyano-7-deazaguanine (preQ(0)). This chain is 7-cyano-7-deazaguanine synthase, found in Rhizobium rhizogenes (strain K84 / ATCC BAA-868) (Agrobacterium radiobacter).